The sequence spans 305 residues: Putative lipid kinase SAR0780 (305 aa).

Positions N3–Y139 constitute a DAGKc domain. ATP-binding positions include S44, G74 to E80, and T101. Mg(2+) contacts are provided by S220, D223, and E225. E281 functions as the Proton acceptor in the catalytic mechanism.

Belongs to the diacylglycerol/lipid kinase family. Requires Mg(2+) as cofactor.

May catalyze the ATP-dependent phosphorylation of lipids other than diacylglycerol (DAG). In fact, is not able to exhibit diacylglycerol kinase activity in vitro. This is Putative lipid kinase SAR0780 from Staphylococcus aureus (strain MRSA252).